Consider the following 366-residue polypeptide: MLIWLVELSEYFKFLNLFRYITFRTGAALFTSALIVFLFGPTIINSLRIRQGKGQPIRADGPQTHFKKAGTPTMGGLMILAGIVGASLLWADLSNVYVVATLLVTLGFGAIGFYDDYLKVTKQSHKGFSGKARLGIEFIIAGIAVYFMMRTALASGTAGSTFGSSIAFPFFKDFLINLGIMFVVFGGFVIVGAGNAVNLTDGLDGLAIVPVMIAAASFGVIAYLAGNVVFANYLQINFVPGTGELAVVLGAVIGAGLGFLWFNAPPAAIFMGDTGSLALGGTIGTVAVATKHEIVMAIIGGLFVMETLSVIIQVGFFKMTGRRVFLMAPIHHHFEKKGWTESQVVIRFWIIAVGLALLGLSTLKLR.

Helical transmembrane passes span 27–47, 71–91, 93–113, 134–154, 174–194, 205–225, 245–265, 268–288, 294–314, and 343–363; these read AALF…INSL, TPTM…LLWA, LSNV…AIGF, LGIE…TALA, FLIN…VGAG, GLAI…AYLA, LAVV…FNAP, AIFM…TVAV, IVMA…IIQV, and QVVI…LSTL.

It belongs to the glycosyltransferase 4 family. MraY subfamily. Mg(2+) serves as cofactor.

The protein resides in the cell inner membrane. The catalysed reaction is UDP-N-acetyl-alpha-D-muramoyl-L-alanyl-gamma-D-glutamyl-meso-2,6-diaminopimeloyl-D-alanyl-D-alanine + di-trans,octa-cis-undecaprenyl phosphate = di-trans,octa-cis-undecaprenyl diphospho-N-acetyl-alpha-D-muramoyl-L-alanyl-D-glutamyl-meso-2,6-diaminopimeloyl-D-alanyl-D-alanine + UMP. It participates in cell wall biogenesis; peptidoglycan biosynthesis. In terms of biological role, catalyzes the initial step of the lipid cycle reactions in the biosynthesis of the cell wall peptidoglycan: transfers peptidoglycan precursor phospho-MurNAc-pentapeptide from UDP-MurNAc-pentapeptide onto the lipid carrier undecaprenyl phosphate, yielding undecaprenyl-pyrophosphoryl-MurNAc-pentapeptide, known as lipid I. This Rhizobium etli (strain CIAT 652) protein is Phospho-N-acetylmuramoyl-pentapeptide-transferase.